The following is a 219-amino-acid chain: Cytidylate kinase (219 aa).

15-23 (GPAASGKGT) is a binding site for ATP.

The protein belongs to the cytidylate kinase family. Type 1 subfamily.

It localises to the cytoplasm. It carries out the reaction CMP + ATP = CDP + ADP. The enzyme catalyses dCMP + ATP = dCDP + ADP. This is Cytidylate kinase from Brucella abortus (strain S19).